We begin with the raw amino-acid sequence, 127 residues long: UPF0102 protein Glov_2230 (127 aa).

The protein belongs to the UPF0102 family.

The protein is UPF0102 protein Glov_2230 of Trichlorobacter lovleyi (strain ATCC BAA-1151 / DSM 17278 / SZ) (Geobacter lovleyi).